Reading from the N-terminus, the 875-residue chain is Leucine--tRNA ligase (875 aa).

Residues 57 to 67 carry the 'HIGH' region motif; that stretch reads PYPSGQIHMGH. Residues 631–635 carry the 'KMSKS' region motif; the sequence is KMSKS. Residue K634 participates in ATP binding.

Belongs to the class-I aminoacyl-tRNA synthetase family.

It localises to the cytoplasm. It catalyses the reaction tRNA(Leu) + L-leucine + ATP = L-leucyl-tRNA(Leu) + AMP + diphosphate. The sequence is that of Leucine--tRNA ligase from Granulibacter bethesdensis (strain ATCC BAA-1260 / CGDNIH1).